A 639-amino-acid polypeptide reads, in one-letter code: Lipoteichoic acid synthase 1 (639 aa).

Over 1 to 3 the chain is Cytoplasmic; it reads MKK. Residues 4 to 24 form a helical membrane-spanning segment; that stretch reads LFSYKLSFFVLAVILFWAKTY. Topologically, residues 25-41 are extracellular; that stretch reads LSYKTEFNLGVKGTTQE. Residues 42–62 traverse the membrane as a helical segment; sequence ILLIFNPFSSAVFFLGLALLA. Residues 63–67 are Cytoplasmic-facing; it reads KGRKS. A helical transmembrane segment spans residues 68–88; that stretch reads AIIMLIIDFLMTFVLYANILF. Topologically, residues 89–116 are extracellular; sequence YRFFDDFLTFPNIKQSGNVGNMGDGIFS. Residues 117–137 traverse the membrane as a helical segment; the sequence is IMAGHDIFYFLDIIILIAVLI. Over 138–150 the chain is Cytoplasmic; it reads WRPELKEYKMKKR. A helical transmembrane segment spans residues 151–171; sequence FASLVILSGIALFFINLHYAE. At 172–639 the chain is on the extracellular side; the sequence is KDRPQLLTRT…YHYGKEKEIK (468 aa). The Mn(2+) site is built by glutamate 252 and threonine 297. Residue threonine 297 is part of the active site. Histidine 413 is a binding site for substrate. 2 residues coordinate Mn(2+): aspartate 472 and histidine 473.

It belongs to the LTA synthase family. Proteolytically cleaved by the type I signal peptidases SipT and SipV.

It is found in the cell membrane. The protein localises to the secreted. It functions in the pathway cell wall biogenesis; lipoteichoic acid biosynthesis. In terms of biological role, catalyzes the polymerization of lipoteichoic acid (LTA) polyglycerol phosphate, a reaction that presumably uses phosphatidylglycerol (PG) as substrate. The protein is Lipoteichoic acid synthase 1 (ltaS1) of Bacillus subtilis (strain 168).